Reading from the N-terminus, the 63-residue chain is Large ribosomal subunit protein bL28 (63 aa).

It belongs to the bacterial ribosomal protein bL28 family.

The chain is Large ribosomal subunit protein bL28 from Desulforudis audaxviator (strain MP104C).